Reading from the N-terminus, the 222-residue chain is Probable GTP-binding protein EngB (222 aa).

The EngB-type G domain occupies 27-202; the sequence is TGIEVAFAGR…AKKLDEWFLG (176 aa). GTP-binding positions include 35-42, 61-65, 81-84, 148-151, and 181-183; these read GRSNAGKS, GRTQL, DLPG, TKAD, and FSS. Mg(2+) is bound by residues serine 42 and threonine 63.

Belongs to the TRAFAC class TrmE-Era-EngA-EngB-Septin-like GTPase superfamily. EngB GTPase family. It depends on Mg(2+) as a cofactor.

Necessary for normal cell division and for the maintenance of normal septation. The chain is Probable GTP-binding protein EngB from Pseudoalteromonas translucida (strain TAC 125).